The sequence spans 1003 residues: SWI/SNF-related matrix-associated actin-dependent regulator of chromatin subfamily A containing DEAD/H box 1 (1003 aa).

Disordered stretches follow at residues 15-130 (KKID…SKYK), 172-235 (GSSR…HFPD), and 274-351 (AKKE…EDYS). Basic and acidic residues-rich tracts occupy residues 172–188 (GSSR…DSSP), 221–235 (KQEA…HFPD), and 274–294 (AKKE…DNKS). Positions 221–264 (KQEASVKKLQRHFPDLDKEELREVLQEHDWSFHEALEALKLFAE) constitute a CUE domain. Over residues 295–311 (SAKAKANQNSNKAMAQN) the composition is skewed to low complexity. Residues 321-333 (KYSENAKRDTRDL) show a composition bias toward basic and acidic residues. The Helicase ATP-binding domain occupies 486–654 (ALLHKHKVNM…MSLLNFVMPH (169 aa)). 499–506 (DEMGLGKT) is an ATP binding site. The DEGH box signature appears at 605–608 (DEGH). In terms of domain architecture, Helicase C-terminal spans 835–997 (ILEKLLSDIK…TIPLDMATLL (163 aa)).

It belongs to the SNF2/RAD54 helicase family.

The protein localises to the nucleus. Its subcellular location is the chromosome. It carries out the reaction ATP + H2O = ADP + phosphate + H(+). In terms of biological role, DNA helicase that possesses intrinsic ATP-dependent nucleosome-remodeling activity and is both required for DNA repair and heterochromatin organization. Promotes DNA end resection of double-strand breaks (DSBs) following DNA damage: probably acts by weakening histone DNA interactions in nucleosomes flanking DSBs. Required for the restoration of heterochromatin organization after replication. This chain is SWI/SNF-related matrix-associated actin-dependent regulator of chromatin subfamily A containing DEAD/H box 1 (smarcad1), found in Xenopus tropicalis (Western clawed frog).